Here is a 184-residue protein sequence, read N- to C-terminus: Cysteine-rich atrial secretory protein (184 aa).

The N-terminal stretch at 1-26 (MATFQAHFFAAVMCVGVLGLSKLCGA) is a signal peptide. 5 disulfides stabilise this stretch: Cys-29–Cys-34, Cys-65–Cys-111, Cys-75–Cys-82, Cys-123–Cys-155, and Cys-135–Cys-144. The N-linked (GlcNAc...) asparagine glycan is linked to Asn-74.

N-glycosylated. As to expression, highly expressed in atrium. Moderately expressed in the pericardium, pulmonary vein, nephridium, arteria anterior, ovotestis and connective tissue. Low expression found in intestine, lung plexus, diaphragm, subesophageal ganglion, ventricle and digestive gland. Very low expression found in columellar retractor, pedal nerves and cerebral ganglion. Not expressed in hemocytes.

Its subcellular location is the secreted. This is Cysteine-rich atrial secretory protein from Achatina achatina (Giant Ghana snail).